The following is a 557-amino-acid chain: Tektin-5 (557 aa).

Positions 302 to 386 (DNIRHAQNMR…LLERAIVAKE (85 aa)) form a coiled coil. 6 repeat units span residues 507–512 (CSGSAL), 513–518 (CKGPAS), 519–524 (CGGGAS), 525–530 (CGGGAS), 531–536 (CGGHAP), and 537–541 (CGSAL). A 6 X 6 AA approximate tandem repeats of C-[GSK]-G-[GSPH]-A-[SLP] region spans residues 507–541 (CSGSALCKGPASCGGGASCGGGASCGGHAPCGSAL).

The protein belongs to the tektin family. Microtubule inner protein component of sperm flagellar doublet microtubules. Interacts with TEKT3. In terms of processing, ubiquitinated, leading to its degradation. Deubiquitinated by USP16, promoting its stability. Strongly expressed in germ cells of the testis (at protein level). Expressed in spermatozoa. Also detected in brain.

It localises to the cytoplasm. The protein resides in the cytoskeleton. It is found in the flagellum axoneme. Functionally, sperm-specific microtubule inner protein (MIP) part of the dynein-decorated doublet microtubules (DMTs) in flagellar axoneme. Forms an extensive interaction network in different conformations that reinforces the helix bundle composed by other tektin proteins (TEKT1 to TEKT4) and MIPs to anchor the tektin bundle onto the tubulin wall of A-tubule of the sperm flagellum. The protein is Tektin-5 of Mus musculus (Mouse).